Reading from the N-terminus, the 156-residue chain is Ribosomal RNA large subunit methyltransferase H (156 aa).

S-adenosyl-L-methionine is bound by residues Leu-73, Gly-104, and 123-128 (IGPLTL).

It belongs to the RNA methyltransferase RlmH family. Homodimer.

Its subcellular location is the cytoplasm. The enzyme catalyses pseudouridine(1915) in 23S rRNA + S-adenosyl-L-methionine = N(3)-methylpseudouridine(1915) in 23S rRNA + S-adenosyl-L-homocysteine + H(+). Specifically methylates the pseudouridine at position 1915 (m3Psi1915) in 23S rRNA. The protein is Ribosomal RNA large subunit methyltransferase H of Xanthomonas campestris pv. campestris (strain 8004).